Here is a 240-residue protein sequence, read N- to C-terminus: Acetoacetyl-CoA reductase (240 aa).

NADP(+)-binding positions include 18-20 (RGI) and 82-86 (NAGIT). Residues S134 and 141–144 (NVGQ) contribute to the substrate site. The active-site Proton acceptor is the Y147. NADP(+) is bound at residue 177–180 (PGFI). A substrate-binding site is contributed by 178 to 179 (GF).

It belongs to the short-chain dehydrogenases/reductases (SDR) family.

The enzyme catalyses a (3R)-3-hydroxyacyl-CoA + NADP(+) = a 3-oxoacyl-CoA + NADPH + H(+). It participates in biopolymer metabolism; poly-(R)-3-hydroxybutanoate biosynthesis. Its function is as follows. Catalyzes the reduction of acetoacetyl-CoA to (R)-3-hydroxybutyryl-CoA. When expressed in E.coli with Synechocystis PhaA, PhaC and PhaE confers the ability to synthesize up to 12% (w/w) poly(3-hydroxybutyrate) (PHB) depending on the carbon source. This chain is Acetoacetyl-CoA reductase, found in Synechocystis sp. (strain ATCC 27184 / PCC 6803 / Kazusa).